Here is a 145-residue protein sequence, read N- to C-terminus: Deoxyuridine 5'-triphosphate nucleotidohydrolase (145 aa).

Substrate is bound by residues 63-65, Gln76, and 80-82; these read RSG and TVD.

This sequence belongs to the dUTPase family. It depends on Mg(2+) as a cofactor.

The catalysed reaction is dUTP + H2O = dUMP + diphosphate + H(+). It participates in pyrimidine metabolism; dUMP biosynthesis; dUMP from dCTP (dUTP route): step 2/2. Functionally, this enzyme is involved in nucleotide metabolism: it produces dUMP, the immediate precursor of thymidine nucleotides and it decreases the intracellular concentration of dUTP so that uracil cannot be incorporated into DNA. In Chlamydia muridarum (strain MoPn / Nigg), this protein is Deoxyuridine 5'-triphosphate nucleotidohydrolase.